Reading from the N-terminus, the 692-residue chain is Elongation factor G (692 aa).

The 276-residue stretch at 9 to 284 (EKIRNIGIMA…AVVDYLPSPV (276 aa)) folds into the tr-type G domain. Residues 18–25 (AHIDAGKT), 82–86 (DTPGH), and 136–139 (NKMD) each bind GTP.

It belongs to the TRAFAC class translation factor GTPase superfamily. Classic translation factor GTPase family. EF-G/EF-2 subfamily.

The protein localises to the cytoplasm. Catalyzes the GTP-dependent ribosomal translocation step during translation elongation. During this step, the ribosome changes from the pre-translocational (PRE) to the post-translocational (POST) state as the newly formed A-site-bound peptidyl-tRNA and P-site-bound deacylated tRNA move to the P and E sites, respectively. Catalyzes the coordinated movement of the two tRNA molecules, the mRNA and conformational changes in the ribosome. The protein is Elongation factor G of Neorickettsia sennetsu (strain ATCC VR-367 / Miyayama) (Ehrlichia sennetsu).